Here is an 88-residue protein sequence, read N- to C-terminus: Apolipoprotein C-I (88 aa).

Residues 1-26 form the signal peptide; sequence MRLILSLPVLAVVLAMVLEGPAPAQA.

The protein belongs to the apolipoprotein C1 family.

It localises to the secreted. Its function is as follows. Inhibitor of lipoprotein binding to the low density lipoprotein (LDL) receptor, LDL receptor-related protein, and very low density lipoprotein (VLDL) receptor. Associates with high density lipoproteins (HDL) and the triacylglycerol-rich lipoproteins in the plasma and makes up about 10% of the protein of the VLDL and 2% of that of HDL. Appears to interfere directly with fatty acid uptake and is also the major plasma inhibitor of cholesteryl ester transfer protein (CETP). Binds free fatty acids and reduces their intracellular esterification. Modulates the interaction of APOE with beta-migrating VLDL and inhibits binding of beta-VLDL to the LDL receptor-related protein. The sequence is that of Apolipoprotein C-I (APOC1) from Eidolon helvum (Straw-colored fruit bat).